Consider the following 538-residue polypeptide: NAD(P)H-quinone oxidoreductase chain 4 (538 aa).

14 helical membrane passes run 11–31 (FPWLSLSIFFPIVGALIVPFI), 43–63 (YALIIALITFLITVAAYFKGF), 95–115 (MPLILLTSFITSLAVLAAWPV), 119–139 (PKLFFFLILAMDGGQIAVFAV), 143–163 (LLFFLAWELELFPVYLFLAIW), 175–195 (FIIYTAGSSLFILLAGLAMGF), 217–237 (GFQLLCYSGLLIAFGVKLPIV), 251–271 (TAPVHMLLAGILLKMGGYALL), 285–305 (FAPLLIVLGVVNIIYAALTSF), 314–334 (IAYSSISHMGFVLIGIGSFSS), 340–360 (AMLQMVSHGLIGASLFFLVGA), 382–404 (IMFALWTACAFASLALPGMSGFI), 425–445 (IVVASLAAIGVILTPIYLLSM), and 472–492 (IYIIACLLVPIIGIGLYPKIM).

Belongs to the complex I subunit 4 family.

The protein localises to the cellular thylakoid membrane. It carries out the reaction a plastoquinone + NADH + (n+1) H(+)(in) = a plastoquinol + NAD(+) + n H(+)(out). The catalysed reaction is a plastoquinone + NADPH + (n+1) H(+)(in) = a plastoquinol + NADP(+) + n H(+)(out). Functionally, NDH-1 shuttles electrons from NAD(P)H, via FMN and iron-sulfur (Fe-S) centers, to quinones in the respiratory chain. The immediate electron acceptor for the enzyme in this species is believed to be plastoquinone. Couples the redox reaction to proton translocation (for every two electrons transferred, four hydrogen ions are translocated across the cytoplasmic membrane), and thus conserves the redox energy in a proton gradient. In Prochlorococcus marinus (strain NATL2A), this protein is NAD(P)H-quinone oxidoreductase chain 4.